A 225-amino-acid polypeptide reads, in one-letter code: UPF0758 protein BP1235 (225 aa).

In terms of domain architecture, MPN spans 103–225 (ALANPDLVRR…TVSMAAQGHL (123 aa)). Zn(2+) is bound by residues H174, H176, and D187. The JAMM motif signature appears at 174-187 (HNHPGGTAAASAAD).

Belongs to the UPF0758 family.

In Bordetella pertussis (strain Tohama I / ATCC BAA-589 / NCTC 13251), this protein is UPF0758 protein BP1235.